The primary structure comprises 576 residues: Arginine--tRNA ligase (576 aa).

The short motif at 121-131 (PNLAKEMHVGH) is the 'HIGH' region element.

It belongs to the class-I aminoacyl-tRNA synthetase family. In terms of assembly, monomer.

Its subcellular location is the cytoplasm. The enzyme catalyses tRNA(Arg) + L-arginine + ATP = L-arginyl-tRNA(Arg) + AMP + diphosphate. The sequence is that of Arginine--tRNA ligase from Alteromonas mediterranea (strain DSM 17117 / CIP 110805 / LMG 28347 / Deep ecotype).